Consider the following 554-residue polypeptide: Afadin- and alpha-actinin-binding protein A (554 aa).

Coiled-coil stretches lie at residues 122–287 and 359–449; these read LEYL…SQRK and ENGL…AIRL. The segment at 508 to 528 is disordered; sequence LASSGDYSRRPSKALPITSSS.

Belongs to the ADIP family. Interacts with WRAP73.

It is found in the cell junction. It localises to the adherens junction. The protein localises to the cytoplasm. The protein resides in the cytoskeleton. Its subcellular location is the microtubule organizing center. It is found in the centrosome. It localises to the centriolar satellite. In terms of biological role, belongs to an adhesion system, which plays a role in the organization of homotypic, interneuronal and heterotypic cell-cell adherens junctions (AJs). Involved in cell movement. Acts as a centrosome maturation factor, probably by maintaining the integrity of the pericentriolar material and proper microtubule nucleation at mitotic spindle poles. The function seems to implicate at least in part WRAP73; the SSX2IP:WRAP73 complex is proposed to act as regulator of spindle anchoring at the mitotic centrosome. The chain is Afadin- and alpha-actinin-binding protein A (ssx2ip-a) from Xenopus laevis (African clawed frog).